A 47-amino-acid polypeptide reads, in one-letter code: Delta-actitoxin-Cgg1b (47 aa).

Pro3 carries the post-translational modification Hydroxyproline. 3 cysteine pairs are disulfide-bonded: Cys4-Cys44, Cys6-Cys34, and Cys27-Cys45.

It belongs to the sea anemone sodium channel inhibitory toxin family. Type I subfamily.

It localises to the secreted. The protein resides in the nematocyst. In terms of biological role, binds voltage-dependently at site 3 of sodium channels (Nav) and inhibits the inactivation, thereby blocking neuronal transmission. The chain is Delta-actitoxin-Cgg1b from Condylactis gigantea (Giant Caribbean anemone).